Here is a 340-residue protein sequence, read N- to C-terminus: MNTEATQEKSNVNSTGERLRTAREQMGLTQQNVAERLCLKLSTIRDIEEDNSPASLASTFLRGYIRSYARLVHVPEEELLPMMAKQAPVRDAKVEMMQSYSLGKQRKKRDGWLMIFTWLVLFVVLGLTGAWWWQNHKAAQDDLVSMGDQNASVEEDGRQSIALSDDNANGGAQTAIPLDNKPATANNAPSSVTATSDNGTPAATAQSSQVTASNAAPAANAVNDNTPPVAVAPSQAATNSSAAAPLPTGSAAVSRPAADANAMMMTFSRDCWLDVTDATGKKLFSGIQRSGGKLSLAGKAPYHLKIGAPAAVQIEYQGKPVDLGRFIRTNQVARLTVGAP.

The Cytoplasmic portion of the chain corresponds to M1–G111. Positions L19–L79 constitute an HTH cro/C1-type domain. A DNA-binding region (H-T-H motif) is located at residues Q30–E49. The helical; Signal-anchor for type II membrane protein transmembrane segment at W112–W132 threads the bilayer. Over W133 to P340 the chain is Periplasmic. Residues A162–A252 are disordered. The segment covering A183–P201 has biased composition (polar residues). Positions A202 to P233 are enriched in low complexity.

It belongs to the RodZ family.

The protein resides in the cell inner membrane. Functionally, cytoskeletal protein that is involved in cell-shape control through regulation of the length of the long axis. This is Cytoskeleton protein RodZ from Erwinia tasmaniensis (strain DSM 17950 / CFBP 7177 / CIP 109463 / NCPPB 4357 / Et1/99).